Reading from the N-terminus, the 83-residue chain is Neurotoxin LmNaTx34.5 (83 aa).

A signal peptide spans 1 to 15 (FILVVIALMVIEVKS). Residues 16–82 (DGYLMVRAGR…IWTYEKNTCS (67 aa)) form the LCN-type CS-alpha/beta domain. Disulfide bonds link Cys-29–Cys-81, Cys-33–Cys-54, Cys-40–Cys-61, and Cys-44–Cys-63.

This sequence belongs to the long (4 C-C) scorpion toxin superfamily. Sodium channel inhibitor family. Beta subfamily. In terms of tissue distribution, expressed by the venom gland.

It is found in the secreted. In terms of biological role, binds voltage-independently at site-4 of sodium channels (Nav) and shift the voltage of activation toward more negative potentials thereby affecting sodium channel activation and promoting spontaneous and repetitive firing. This chain is Neurotoxin LmNaTx34.5, found in Lychas mucronatus (Chinese swimming scorpion).